A 629-amino-acid chain; its full sequence is Chaperone protein HtpG (629 aa).

The segment at 1–335 (MSEVETSVEK…TADLPLNVSR (335 aa)) is a; substrate-binding. Residues 336 to 551 (EMIQESPLLA…EQGPDRQLQK (216 aa)) form a b region. Residues 552 to 629 (MLQDAGRIEG…SRVFGRALKE (78 aa)) are c.

Belongs to the heat shock protein 90 family. In terms of assembly, homodimer.

The protein resides in the cytoplasm. In terms of biological role, molecular chaperone. Has ATPase activity. This Rhizobium meliloti (strain 1021) (Ensifer meliloti) protein is Chaperone protein HtpG.